Here is a 116-residue protein sequence, read N- to C-terminus: Aspartate 1-decarboxylase (116 aa).

The Schiff-base intermediate with substrate; via pyruvic acid role is filled by Ser25. Ser25 carries the pyruvic acid (Ser) modification. Thr57 contacts substrate. Catalysis depends on Tyr58, which acts as the Proton donor. 73-75 serves as a coordination point for substrate; sequence GAA.

Belongs to the PanD family. Heterooctamer of four alpha and four beta subunits. It depends on pyruvate as a cofactor. Is synthesized initially as an inactive proenzyme, which is activated by self-cleavage at a specific serine bond to produce a beta-subunit with a hydroxyl group at its C-terminus and an alpha-subunit with a pyruvoyl group at its N-terminus.

It localises to the cytoplasm. It catalyses the reaction L-aspartate + H(+) = beta-alanine + CO2. It participates in cofactor biosynthesis; (R)-pantothenate biosynthesis; beta-alanine from L-aspartate: step 1/1. In terms of biological role, catalyzes the pyruvoyl-dependent decarboxylation of aspartate to produce beta-alanine. This is Aspartate 1-decarboxylase from Phocaeicola vulgatus (strain ATCC 8482 / DSM 1447 / JCM 5826 / CCUG 4940 / NBRC 14291 / NCTC 11154) (Bacteroides vulgatus).